A 355-amino-acid chain; its full sequence is Fe-S cluster assembly protein DRE2 (355 aa).

The tract at residues 23–156 (TSFNPRTLLL…KPDYSASVAV (134 aa)) is N-terminal SAM-like domain. The tract at residues 157–247 (PLRLRRKDNS…EDTLLTEEDM (91 aa)) is linker. A disordered region spans residues 189 to 214 (RKSVDMTDDVPEKDVPKVDSPKNDAP). Positions 190-213 (KSVDMTDDVPEKDVPKVDSPKNDA) are enriched in basic and acidic residues. Residues Cys257, Cys268, Cys271, and Cys273 each coordinate [2Fe-2S] cluster. The interval 257–273 (CAPRAGKRRRACKDCTC) is fe-S binding site A. 4 residues coordinate [4Fe-4S] cluster: Cys318, Cys321, Cys329, and Cys332. Short sequence motifs (cx2C motif) lie at residues 318–321 (CGNC) and 329–332 (CDGC). A fe-S binding site B region spans residues 318–332 (CGNCSLGDAFRCDGC).

This sequence belongs to the anamorsin family. As to quaternary structure, monomer. Interacts with TAH18. Interacts with MIA40. [2Fe-2S] cluster is required as a cofactor. It depends on [4Fe-4S] cluster as a cofactor.

It is found in the cytoplasm. It localises to the mitochondrion intermembrane space. Its function is as follows. Component of the cytosolic iron-sulfur (Fe-S) protein assembly (CIA) machinery required for the maturation of extramitochondrial Fe-S proteins. Part of an electron transfer chain functioning in an early step of cytosolic Fe-S biogenesis, facilitating the de novo assembly of a [4Fe-4S] cluster on the scaffold complex CFD1-NBP35. Electrons are transferred to DRE2 from NADPH via the FAD- and FMN-containing protein TAH18. TAH18-DRE2 are also required for the assembly of the diferric tyrosyl radical cofactor of ribonucleotide reductase (RNR), probably by providing electrons for reduction during radical cofactor maturation in the catalytic small subunit RNR2. The polypeptide is Fe-S cluster assembly protein DRE2 (Botryotinia fuckeliana (strain B05.10) (Noble rot fungus)).